The sequence spans 597 residues: Aspartate--tRNA ligase (597 aa).

Glutamate 180 serves as a coordination point for L-aspartate. The interval 204–207 (QLFK) is aspartate. Position 226 (arginine 226) interacts with L-aspartate. ATP contacts are provided by residues 226–228 (RDE) and glutamine 235. Histidine 454 is an L-aspartate binding site. Glutamate 488 contacts ATP. Arginine 495 contacts L-aspartate. Residue 540 to 543 (GLDR) coordinates ATP.

The protein belongs to the class-II aminoacyl-tRNA synthetase family. Type 1 subfamily. In terms of assembly, homodimer.

It localises to the cytoplasm. It carries out the reaction tRNA(Asp) + L-aspartate + ATP = L-aspartyl-tRNA(Asp) + AMP + diphosphate. In terms of biological role, catalyzes the attachment of L-aspartate to tRNA(Asp) in a two-step reaction: L-aspartate is first activated by ATP to form Asp-AMP and then transferred to the acceptor end of tRNA(Asp). The chain is Aspartate--tRNA ligase from Clostridium perfringens (strain SM101 / Type A).